Here is a 209-residue protein sequence, read N- to C-terminus: Uracil phosphoribosyltransferase (209 aa).

Residues Arg79, Arg104, and 131 to 139 (DPMLATGNS) contribute to the 5-phospho-alpha-D-ribose 1-diphosphate site. Residues Ile194 and 199 to 201 (GDA) each bind uracil. A 5-phospho-alpha-D-ribose 1-diphosphate-binding site is contributed by Asp200.

Belongs to the UPRTase family. The cofactor is Mg(2+).

The enzyme catalyses UMP + diphosphate = 5-phospho-alpha-D-ribose 1-diphosphate + uracil. It participates in pyrimidine metabolism; UMP biosynthesis via salvage pathway; UMP from uracil: step 1/1. With respect to regulation, allosterically activated by GTP. Catalyzes the conversion of uracil and 5-phospho-alpha-D-ribose 1-diphosphate (PRPP) to UMP and diphosphate. The sequence is that of Uracil phosphoribosyltransferase from Delftia acidovorans (strain DSM 14801 / SPH-1).